The sequence spans 895 residues: Microsomal triglyceride transfer protein large subunit (895 aa).

A signal peptide spans 1 to 18; it reads MILLAVLFLCFFSSYSAS. One can recognise a Vitellogenin domain in the interval 28–659; the sequence is LNNERLYKLT…VFQYLGKAGL (632 aa). C174 and C194 are joined by a disulfide.

Heterodimer; heterodimerizes with the protein disulfide isomerase (P4HB/PDI). Interacts with APOB. Interacts with PRAP1.

It localises to the endoplasmic reticulum. Its subcellular location is the golgi apparatus. The enzyme catalyses a 1,2-diacyl-sn-glycero-3-phosphocholine(in) = a 1,2-diacyl-sn-glycero-3-phosphocholine(out). The catalysed reaction is a 1,2-diacyl-sn-glycero-3-phosphoethanolamine(in) = a 1,2-diacyl-sn-glycero-3-phosphoethanolamine(out). It catalyses the reaction a cholesterol ester(in) = a cholesterol ester(out). It carries out the reaction a triacyl-sn-glycerol(in) = a triacyl-sn-glycerol(out). Catalyzes the transport of triglyceride, cholesteryl ester, and phospholipid between phospholipid surfaces. Required for the assembly and secretion of plasma lipoproteins that contain apolipoprotein B. May be involved in regulating cholesteryl ester biosynthesis in cells that produce lipoproteins. The sequence is that of Microsomal triglyceride transfer protein large subunit (MTTP) from Mesocricetus auratus (Golden hamster).